The primary structure comprises 190 residues: Transcription factor bHLH162 (190 aa).

The span at 1–12 shows a compositional bias: polar residues; it reads MEPSHSNTGQSR. The disordered stretch occupies residues 1–21; it reads MEPSHSNTGQSRSVDRKTVEK. A bHLH domain is found at 11–63; the sequence is SRSVDRKTVEKNRRMQMKSLYSELISLLPHHSSTEPLTLPDQLDEAANYIKKL.

The protein belongs to the bHLH protein family.

The protein localises to the nucleus. In Arabidopsis thaliana (Mouse-ear cress), this protein is Transcription factor bHLH162.